A 158-amino-acid polypeptide reads, in one-letter code: Serine-protein kinase RsbW (158 aa).

Belongs to the anti-sigma-factor family.

The catalysed reaction is L-seryl-[protein] + ATP = O-phospho-L-seryl-[protein] + ADP + H(+). It catalyses the reaction L-threonyl-[protein] + ATP = O-phospho-L-threonyl-[protein] + ADP + H(+). Its function is as follows. Negative regulator of sigma-B activity. Phosphorylates and inactivates its specific antagonist protein, RsbV. Upon phosphorylation of RsbV, RsbW is released and binds to sigma-B, thereby blocking its ability to form an RNA polymerase holoenzyme (E-sigma-B). The polypeptide is Serine-protein kinase RsbW (Oceanobacillus iheyensis (strain DSM 14371 / CIP 107618 / JCM 11309 / KCTC 3954 / HTE831)).